The following is a 1439-amino-acid chain: MGARASVLSGGELDRWEKIRLRPGGKKKYRLKHIVWASRELERFAVNPGLLESSEGCRQILGQLQPSLKTGSEELTSLYNTVATLYCVHQRIEIKDTKEALEKIEEEQTKSMKKAQQAAADTGNSSQVSQNYPIVQNLQGQMVHQAISPRTLNAWVKVIEEKAFSPEVIPMFSALSEGATPQDLNTMLNTVGGHQAAMQMLKETINEEAAEWDRLHPVHAGPIAPGQMREPRGSDIAGTTSTLQEQIGWMTNNPPIPVGEIYKRWIILGLNKIVRMYSPVSILDIRQGPKEPFRDYVDRFYKTLRAEQATQEVKNWMTETLLVQNANPDCKTILKALGPAATLEEMMTACQGVGGPGHKARVLAEAMSQVTNPATIMMQRGNFRNQRKNVKCFNCGKEGHIARNCRAPRKKGCWKCGKEGHQMKECTERQANFLREDLAFLQGKAREFPSEQTRANSPTRRELQVWGRDSNSLSEAGAEAGADRQGIVSFNFPQITLWQRPLVTIKIGGQLKEALLDTGADDTVLEDMDLPGRWKPKMIGGIGGFIKVRQYDQIPIDICGHKAVGTVLVGPTPVNIIGRNLLTQIGCTLNFPISPIETVPVKLKPGMDGPKVKQWPLTEEKIKALVEICTEMEKEGKISKIGPENPYNTPVFAIKKKDSTKWRKLVDFRELNRRTQDFWEVQLGIPHPAGLKKKKSVTVLDVGDAYFSVPLDKDFRKYTAFTIPSINNETPGIRYQYNVLPQGWKGSPAIFQSSMTKILEPFRKQNPDIIIYQYMDDLYVGSDLEIGQHRTKIEELRQHLLKWGFTTPDKKHQKEPPFLWMGYELHPDKWTVQPIVLPEKDSWTVNDIQKLVGKLNWASQIYAGIKVKQLCKLLRGTKALTEVIPLTKEAELELAENREILKEPVHGVYYDPSKDLIVEIQKQGQGQWTYQIFQEPFKNLKTGKYARTRGAHTNDVKQLTEAVQKIANESIVIWGKIPKFKLPIQKETWETWWTEYWQATWIPEWEFVNTPPLVKLWYQLEKEPIVGAETFYVDGAANRETKLGKAGYVTSRGRQKVVSLTDTTNQKTELQAIHLALQDSGLEVNIVTDSQYALGIIQAQPDKSESELVSQIIEQLIKKEKVYLAWVPAHKGIGGNEQVDKLVSAGIRKVLFLDGIDKAQEDHEKYHSNWRAMASDFNLPPIVAKEIVASCDKCQLKGEAMHGQVDCSPGIWQLDCTHLEGKIILVAVHVASGYIEAEVIPAETGQETAYFLLKLAGRWPVTTIHTDNGSNFTSTTVKAACWWAGIKQEFGIPYNPQSQGVVESMNKELKKIIGQVRDQAEHLKTAVQMAVFIHNFKRKGGIGGYSAGERIIDIIATDIQTKELQKQITKIQNFRVYYRDNRDPIWKGPAKLLWKGEGAVVIQDNSDIKVVPRRKVKIIRDYGKQMAGDDCVASRQDED.

Gly2 carries the N-myristoyl glycine; by host lipid modification. The interaction with Gp41 stretch occupies residues 7–31 (VLSGGELDRWEKIRLRPGGKKKYRL). Positions 8–43 (LSGGELDRWEKIRLRPGGKKKYRLKHIVWASRELER) are interaction with host CALM1. An interaction with host AP3D1 region spans residues 12–19 (ELDRWEKI). The tract at residues 14-33 (DRWEKIRLRPGGKKKYRLKH) is interaction with membrane phosphatidylinositol 4,5-bisphosphate and RNA. The Nuclear export signal motif lies at 16–22 (WEKIRLR). The Nuclear localization signal signature appears at 26-32 (KKKYRLK). The interval 73–77 (EELTS) is interaction with membrane phosphatidylinositol 4,5-bisphosphate. The disordered stretch occupies residues 106–128 (EEQTKSMKKAQQAAADTGNSSQV). At Tyr132 the chain carries Phosphotyrosine; by host. The segment at 189-227 (NTVGGHQAAMQMLKETINEEAAEWDRLHPVHAGPIAPGQ) is interaction with human PPIA/CYPA and NUP153. The tract at residues 277–363 (YSPVSILDIR…GGPGHKARVL (87 aa)) is dimerization/Multimerization of capsid protein p24. CCHC-type zinc fingers lie at residues 390–407 (VKCF…NCRA) and 411–428 (KGCW…ECTE). Residues 493-497 (PQITL) are dimerization of protease. The region spanning 512–581 (KEALLDTGAD…TPVNIIGRNL (70 aa)) is the Peptidase A2 domain. Residue Asp517 is the For protease activity; shared with dimeric partner of the active site. Dimerization of protease regions lie at residues 541-547 (GIGGFIK) and 580-592 (NLLT…LNFP). In terms of domain architecture, Reverse transcriptase spans 635 to 825 (EGKISKIGPE…PPFLWMGYEL (191 aa)). Residues Asp701, Asp776, and Asp777 each coordinate Mg(2+). Residues 818 to 826 (FLWMGYELH) are RT 'primer grip'. The Tryptophan repeat motif motif lies at 989–1005 (WETWWTEYWQATWIPEW). Residues 1025–1148 (IVGAETFYVD…VDKLVSAGIR (124 aa)) enclose the RNase H type-1 domain. Residues Asp1034, Glu1069, Asp1089, and Asp1140 each contribute to the Mg(2+) site. The Integrase-type zinc-finger motif lies at 1154–1195 (DGIDKAQEDHEKYHSNWRAMASDFNLPPIVAKEIVASCDKCQ). Zn(2+) is bound by residues His1163, His1167, Cys1191, and Cys1194. Positions 1205–1355 (VDCSPGIWQL…SAGERIIDII (151 aa)) constitute an Integrase catalytic domain. Mg(2+) is bound by residues Asp1215, Asp1267, and Glu1303. The segment at residues 1374-1421 (FRVYYRDNRDPIWKGPAKLLWKGEGAVVIQDNSDIKVVPRRKVKIIRD) is a DNA-binding region (integrase-type).

As to quaternary structure, homotrimer; further assembles as hexamers of trimers. Interacts with gp41 (via C-terminus). Interacts with host CALM1; this interaction induces a conformational change in the Matrix protein, triggering exposure of the myristate group. Interacts with host AP3D1; this interaction allows the polyprotein trafficking to multivesicular bodies during virus assembly. Part of the pre-integration complex (PIC) which is composed of viral genome, matrix protein, Vpr and integrase. Homodimer; the homodimer further multimerizes as homohexamers or homopentamers. Interacts with human PPIA/CYPA; This interaction stabilizes the capsid. Interacts with human NUP153. Interacts with host PDZD8; this interaction stabilizes the capsid. Interacts with monkey TRIM5; this interaction destabilizes the capsid. In terms of assembly, homodimer, whose active site consists of two apposed aspartic acid residues. As to quaternary structure, heterodimer of p66 RT and p51 RT (RT p66/p51). Heterodimerization of RT is essential for DNA polymerase activity. The overall folding of the subdomains is similar in p66 RT and p51 RT but the spatial arrangements of the subdomains are dramatically different. Homotetramer; may further associate as a homohexadecamer. Part of the pre-integration complex (PIC) which is composed of viral genome, matrix protein, Vpr and integrase. Interacts with human SMARCB1/INI1 and human PSIP1/LEDGF isoform 1. Interacts with human KPNA3; this interaction might play a role in nuclear import of the pre-integration complex. Interacts with human NUP153; this interaction might play a role in nuclear import of the pre-integration complex. The cofactor is Mg(2+). Post-translationally, specific enzymatic cleavages by the viral protease yield mature proteins. The protease is released by autocatalytic cleavage. The polyprotein is cleaved during and after budding, this process is termed maturation. Proteolytic cleavage of p66 RT removes the RNase H domain to yield the p51 RT subunit. Nucleocapsid protein p7 might be further cleaved after virus entry. Tyrosine phosphorylated presumably in the virion by a host kinase. Phosphorylation is apparently not a major regulator of membrane association. In terms of processing, phosphorylated possibly by host MAPK1; this phosphorylation is necessary for Pin1-mediated virion uncoating. Post-translationally, methylated by host PRMT6, impairing its function by reducing RNA annealing and the initiation of reverse transcription.

It localises to the host cell membrane. Its subcellular location is the host endosome. The protein localises to the host multivesicular body. It is found in the virion membrane. The protein resides in the host nucleus. It localises to the host cytoplasm. Its subcellular location is the virion. It catalyses the reaction Specific for a P1 residue that is hydrophobic, and P1' variable, but often Pro.. The enzyme catalyses Endohydrolysis of RNA in RNA/DNA hybrids. Three different cleavage modes: 1. sequence-specific internal cleavage of RNA. Human immunodeficiency virus type 1 and Moloney murine leukemia virus enzymes prefer to cleave the RNA strand one nucleotide away from the RNA-DNA junction. 2. RNA 5'-end directed cleavage 13-19 nucleotides from the RNA end. 3. DNA 3'-end directed cleavage 15-20 nucleotides away from the primer terminus.. It carries out the reaction 3'-end directed exonucleolytic cleavage of viral RNA-DNA hybrid.. The catalysed reaction is DNA(n) + a 2'-deoxyribonucleoside 5'-triphosphate = DNA(n+1) + diphosphate. Its activity is regulated as follows. Protease: The viral protease is inhibited by many synthetic protease inhibitors (PIs), such as amprenavir, atazanavir, indinavir, loprinavir, nelfinavir, ritonavir and saquinavir. Use of protease inhibitors in tritherapy regimens permit more ambitious therapeutic strategies. Reverse transcriptase/ribonuclease H: RT can be inhibited either by nucleoside RT inhibitors (NRTIs) or by non nucleoside RT inhibitors (NNRTIs). NRTIs act as chain terminators, whereas NNRTIs inhibit DNA polymerization by binding a small hydrophobic pocket near the RT active site and inducing an allosteric change in this region. Classical NRTIs are abacavir, adefovir (PMEA), didanosine (ddI), lamivudine (3TC), stavudine (d4T), tenofovir (PMPA), zalcitabine (ddC), and zidovudine (AZT). Classical NNRTIs are atevirdine (BHAP U-87201E), delavirdine, efavirenz (DMP-266), emivirine (I-EBU), and nevirapine (BI-RG-587). The tritherapies used as a basic effective treatment of AIDS associate two NRTIs and one NNRTI. Its function is as follows. Mediates, with Gag polyprotein, the essential events in virion assembly, including binding the plasma membrane, making the protein-protein interactions necessary to create spherical particles, recruiting the viral Env proteins, and packaging the genomic RNA via direct interactions with the RNA packaging sequence (Psi). Gag-Pol polyprotein may regulate its own translation, by the binding genomic RNA in the 5'-UTR. At low concentration, the polyprotein would promote translation, whereas at high concentration, the polyprotein would encapsidate genomic RNA and then shut off translation. In terms of biological role, targets the polyprotein to the plasma membrane via a multipartite membrane-binding signal, that includes its myristoylated N-terminus. Matrix protein is part of the pre-integration complex. Implicated in the release from host cell mediated by Vpu. Binds to RNA. Forms the conical core that encapsulates the genomic RNA-nucleocapsid complex in the virion. Most core are conical, with only 7% tubular. The core is constituted by capsid protein hexamer subunits. The core is disassembled soon after virion entry. Host restriction factors such as TRIM5-alpha or TRIMCyp bind retroviral capsids and cause premature capsid disassembly, leading to blocks in reverse transcription. Capsid restriction by TRIM5 is one of the factors which restricts HIV-1 to the human species. Host PIN1 apparently facilitates the virion uncoating. On the other hand, interactions with PDZD8 or CYPA stabilize the capsid. Functionally, encapsulates and protects viral dimeric unspliced genomic RNA (gRNA). Binds these RNAs through its zinc fingers. Acts as a nucleic acid chaperone which is involved in rearangement of nucleic acid secondary structure during gRNA retrotranscription. Also facilitates template switch leading to recombination. As part of the polyprotein, participates in gRNA dimerization, packaging, tRNA incorporation and virion assembly. Its function is as follows. Aspartyl protease that mediates proteolytic cleavages of Gag and Gag-Pol polyproteins during or shortly after the release of the virion from the plasma membrane. Cleavages take place as an ordered, step-wise cascade to yield mature proteins. This process is called maturation. Displays maximal activity during the budding process just prior to particle release from the cell. Also cleaves Nef and Vif, probably concomitantly with viral structural proteins on maturation of virus particles. Hydrolyzes host EIF4GI and PABP1 in order to shut off the capped cellular mRNA translation. The resulting inhibition of cellular protein synthesis serves to ensure maximal viral gene expression and to evade host immune response. Also mediates cleavage of host YTHDF3. Mediates cleavage of host CARD8, thereby activating the CARD8 inflammasome, leading to the clearance of latent HIV-1 in patient CD4(+) T-cells after viral reactivation; in contrast, HIV-1 can evade CARD8-sensing when its protease remains inactive in infected cells prior to viral budding. In terms of biological role, multifunctional enzyme that converts the viral RNA genome into dsDNA in the cytoplasm, shortly after virus entry into the cell. This enzyme displays a DNA polymerase activity that can copy either DNA or RNA templates, and a ribonuclease H (RNase H) activity that cleaves the RNA strand of RNA-DNA heteroduplexes in a partially processive 3' to 5' endonucleasic mode. Conversion of viral genomic RNA into dsDNA requires many steps. A tRNA(3)-Lys binds to the primer-binding site (PBS) situated at the 5'-end of the viral RNA. RT uses the 3' end of the tRNA primer to perform a short round of RNA-dependent minus-strand DNA synthesis. The reading proceeds through the U5 region and ends after the repeated (R) region which is present at both ends of viral RNA. The portion of the RNA-DNA heteroduplex is digested by the RNase H, resulting in a ssDNA product attached to the tRNA primer. This ssDNA/tRNA hybridizes with the identical R region situated at the 3' end of viral RNA. This template exchange, known as minus-strand DNA strong stop transfer, can be either intra- or intermolecular. RT uses the 3' end of this newly synthesized short ssDNA to perform the RNA-dependent minus-strand DNA synthesis of the whole template. RNase H digests the RNA template except for two polypurine tracts (PPTs) situated at the 5'-end and near the center of the genome. It is not clear if both polymerase and RNase H activities are simultaneous. RNase H probably can proceed both in a polymerase-dependent (RNA cut into small fragments by the same RT performing DNA synthesis) and a polymerase-independent mode (cleavage of remaining RNA fragments by free RTs). Secondly, RT performs DNA-directed plus-strand DNA synthesis using the PPTs that have not been removed by RNase H as primers. PPTs and tRNA primers are then removed by RNase H. The 3' and 5' ssDNA PBS regions hybridize to form a circular dsDNA intermediate. Strand displacement synthesis by RT to the PBS and PPT ends produces a blunt ended, linear dsDNA copy of the viral genome that includes long terminal repeats (LTRs) at both ends. Catalyzes viral DNA integration into the host chromosome, by performing a series of DNA cutting and joining reactions. This enzyme activity takes place after virion entry into a cell and reverse transcription of the RNA genome in dsDNA. The first step in the integration process is 3' processing. This step requires a complex comprising the viral genome, matrix protein, Vpr and integrase. This complex is called the pre-integration complex (PIC). The integrase protein removes 2 nucleotides from each 3' end of the viral DNA, leaving recessed CA OH's at the 3' ends. In the second step, the PIC enters cell nucleus. This process is mediated through integrase and Vpr proteins, and allows the virus to infect a non dividing cell. This ability to enter the nucleus is specific of lentiviruses, other retroviruses cannot and rely on cell division to access cell chromosomes. In the third step, termed strand transfer, the integrase protein joins the previously processed 3' ends to the 5' ends of strands of target cellular DNA at the site of integration. The 5'-ends are produced by integrase-catalyzed staggered cuts, 5 bp apart. A Y-shaped, gapped, recombination intermediate results, with the 5'-ends of the viral DNA strands and the 3' ends of target DNA strands remaining unjoined, flanking a gap of 5 bp. The last step is viral DNA integration into host chromosome. This involves host DNA repair synthesis in which the 5 bp gaps between the unjoined strands are filled in and then ligated. Since this process occurs at both cuts flanking the HIV genome, a 5 bp duplication of host DNA is produced at the ends of HIV-1 integration. Alternatively, Integrase may catalyze the excision of viral DNA just after strand transfer, this is termed disintegration. The chain is Gag-Pol polyprotein (gag-pol) from Human immunodeficiency virus type 1 group M subtype B (isolate JRCSF) (HIV-1).